Reading from the N-terminus, the 371-residue chain is Antibiotic efflux pump periplasmic linker protein ArpA (371 aa).

The signal sequence occupies residues 1–22; the sequence is MQFKPAVTALVSAVALATLLSG. Cys23 carries the N-palmitoyl cysteine lipid modification. Cys23 is lipidated: S-diacylglycerol cysteine. Positions 115 to 155 form a coiled coil; sequence LAERYKQLIDEQAVSKQEYDDANAKRLQAEASLKSAQIDLR.

Belongs to the membrane fusion protein (MFP) (TC 8.A.1) family.

Its subcellular location is the cell inner membrane. Its function is as follows. The periplasmic linker protein component of an antibiotic efflux pump. Confers resistance to numerous structurally unrelated antibiotics such as carbenicillin, chloramphenicol, erythromycin, novobiocin, streptomycin and tetracycline. Is not involved in organic solvent efflux. The protein is Antibiotic efflux pump periplasmic linker protein ArpA (arpA) of Pseudomonas putida (Arthrobacter siderocapsulatus).